Here is a 383-residue protein sequence, read N- to C-terminus: D-alanine--D-alanine ligase (383 aa).

Residues 164 to 373 form the ATP-grasp domain; it reads KLAFQAAGLE…YSALIDELIT (210 aa). 196–251 contributes to the ATP binding site; sequence VAELGFPVFVKPARAGSSFGITRVDEPSQLDAAIATAREHDLKLVVEAGIDGREIE. Mg(2+) is bound by residues aspartate 327, glutamate 340, and asparagine 342.

The protein belongs to the D-alanine--D-alanine ligase family. Mg(2+) is required as a cofactor. Mn(2+) serves as cofactor.

The protein resides in the cytoplasm. The catalysed reaction is 2 D-alanine + ATP = D-alanyl-D-alanine + ADP + phosphate + H(+). It participates in cell wall biogenesis; peptidoglycan biosynthesis. In terms of biological role, cell wall formation. The protein is D-alanine--D-alanine ligase of Kocuria rhizophila (strain ATCC 9341 / DSM 348 / NBRC 103217 / DC2201).